The following is a 230-amino-acid chain: 5'-methylthioadenosine/S-adenosylhomocysteine nucleosidase (230 aa).

The active-site Proton acceptor is E12. Residues G78, M153, and 174–175 contribute to the substrate site; that span reads ME. D198 serves as the catalytic Proton donor.

It belongs to the PNP/UDP phosphorylase family. MtnN subfamily.

The enzyme catalyses S-adenosyl-L-homocysteine + H2O = S-(5-deoxy-D-ribos-5-yl)-L-homocysteine + adenine. It catalyses the reaction S-methyl-5'-thioadenosine + H2O = 5-(methylsulfanyl)-D-ribose + adenine. It carries out the reaction 5'-deoxyadenosine + H2O = 5-deoxy-D-ribose + adenine. It participates in amino-acid biosynthesis; L-methionine biosynthesis via salvage pathway; S-methyl-5-thio-alpha-D-ribose 1-phosphate from S-methyl-5'-thioadenosine (hydrolase route): step 1/2. In terms of biological role, catalyzes the irreversible cleavage of the glycosidic bond in both 5'-methylthioadenosine (MTA) and S-adenosylhomocysteine (SAH/AdoHcy) to adenine and the corresponding thioribose, 5'-methylthioribose and S-ribosylhomocysteine, respectively. Also cleaves 5'-deoxyadenosine, a toxic by-product of radical S-adenosylmethionine (SAM) enzymes, into 5-deoxyribose and adenine. The protein is 5'-methylthioadenosine/S-adenosylhomocysteine nucleosidase of Aeromonas salmonicida (strain A449).